The chain runs to 218 residues: 7-cyano-7-deazaguanine synthase (218 aa).

9-19 (FSGGMDSFTVL) lines the ATP pocket. Zn(2+) is bound by residues C185, C193, C196, and C199.

Belongs to the QueC family. Requires Zn(2+) as cofactor.

It catalyses the reaction 7-carboxy-7-deazaguanine + NH4(+) + ATP = 7-cyano-7-deazaguanine + ADP + phosphate + H2O + H(+). The protein operates within purine metabolism; 7-cyano-7-deazaguanine biosynthesis. Its function is as follows. Catalyzes the ATP-dependent conversion of 7-carboxy-7-deazaguanine (CDG) to 7-cyano-7-deazaguanine (preQ(0)). The polypeptide is 7-cyano-7-deazaguanine synthase (Pseudoalteromonas atlantica (strain T6c / ATCC BAA-1087)).